The chain runs to 42 residues: uncharacterized protein (42 aa).

Residues 10 to 30 form a helical membrane-spanning segment; it reads VANWVTVILMALAGYAVLALA.

It is found in the host membrane. This is an uncharacterized protein from Acinetobacter calcoaceticus (Arthrobacter siderocapsulatus).